Reading from the N-terminus, the 253-residue chain is Acidic endochitinase Q (253 aa).

The N-terminal stretch at 1-24 is a signal peptide; the sequence is MEFSGSPMALFCCVFFLFLTGSLA. Residue Glu92 is the Proton donor of the active site. A disulfide bond links Cys212 and Cys244.

Belongs to the glycosyl hydrolase 19 family. Chitinase class I subfamily.

Its subcellular location is the secreted. It carries out the reaction Random endo-hydrolysis of N-acetyl-beta-D-glucosaminide (1-&gt;4)-beta-linkages in chitin and chitodextrins.. Functionally, defense against chitin-containing fungal pathogens. This is Acidic endochitinase Q from Nicotiana tabacum (Common tobacco).